The following is a 565-amino-acid chain: MTSAVSFPITSQASDMLSKFYGSDLGSLYGTLAEKYSGGKPELAEKLRDYACKGWFGYSSPILTSVTGSGLPISCFLLYVPDTIEGLVDHTSELRWLSVMGGGVAGHWDDVRGPSAKSCGTIPFLHTVDADMSAYWQGKVRRGSYAAYMSISHPDLIEFITMRTPTGDVNRKNLNLHHGVNITDTFMRCVERGENWDLVDPKSGAVAHTVSARELWERILETRFRTGEPYLNFIDTANRGLHPALKRKGLKIRGSNLCNEIHLPTAADRTAVCCLSSVNLERYDEWRETDLVECLVEMLDNVIQTFVDEAPLKTPHTARAVRSAAGERSIGLGAMGWARYLQKHRIPFDSEEAVRLTGIIFRGIKSAAVRATRALAKERGEAPDLTGYGVRNAHLLAVAPNANSALLLGTSPSVEPEIGAAYVHRTRVGSHQAVNPYLKRDLESLGLDTEEVWDSIVSNKGSVQHIAALPDSLKKVYKTSFEMDQRVIVRQAAERQRHLCQGQSLNLFFPIGADKTNLSDVHRLAWKSGCKGLYYLRTCAGRTGHKIFEAKKNPEKTEECTACQG.

Residues serine 60, 74-75 (SC), glycine 103, 256-260 (NLCNE), and 400-404 (PNANS) each bind substrate. The cysteines at positions 75 and 273 are disulfide-linked. Asparagine 256 (proton acceptor) is an active-site residue. The Cysteine radical intermediate role is filled by cysteine 258. Residue glutamate 260 is the Proton acceptor of the active site.

It belongs to the ribonucleoside diphosphate reductase large chain family. In terms of assembly, heterotetramer composed of a homodimer of the large subunit (R1) and a homodimer of the small subunit (R2). Larger multisubunit protein complex are also active, composed of (R1)n(R2)n.

It catalyses the reaction a 2'-deoxyribonucleoside 5'-diphosphate + [thioredoxin]-disulfide + H2O = a ribonucleoside 5'-diphosphate + [thioredoxin]-dithiol. With respect to regulation, under complex allosteric control mediated by deoxynucleoside triphosphates and ATP binding. The type of nucleotide bound at the specificity site determines substrate preference. It seems probable that ATP makes the enzyme reduce CDP and UDP, dGTP favors ADP reduction and dTTP favors GDP reduction. Its function is as follows. Ribonucleoside-diphosphate reductase holoenzyme provides the precursors necessary for viral DNA synthesis. Allows virus growth in non-dividing cells. Catalyzes the biosynthesis of deoxyribonucleotides from the corresponding ribonucleotides. The protein is Putative ribonucleoside-diphosphate reductase large subunit of Frog virus 3 (isolate Goorha) (FV-3).